The following is a 91-amino-acid chain: Small ribosomal subunit protein uS19 (91 aa).

The protein belongs to the universal ribosomal protein uS19 family.

In terms of biological role, protein S19 forms a complex with S13 that binds strongly to the 16S ribosomal RNA. This is Small ribosomal subunit protein uS19 from Verminephrobacter eiseniae (strain EF01-2).